A 540-amino-acid chain; its full sequence is MKLAASFLLMLLEVLLLPETPLSAEEALASTPGSPLSSTEYERFFALLTPTWKAETTCRLRATHGCRNPTLVQLDQYENHGLVPDGAVCSDLPYASWFESFCQFAQYRCSNHVYYAKRVRCSQPVSILSPNTLKEVESSAEVPLTSVTTPIVSRATATEHQAFQPWPERLNNNVEELLQSSLSLGGKEQQSSRKLGLEQQHKQEQIQEHKLEEAQEQEEQEEEEEEEEAKQEEGQGTEEGLDSVSRLQSDSEPKFQSKSLSSNPSFFTPRVREVESAPLMMENIQELIRSAQEMDEMNELYDDSWRSQSTGSLQQLPHTETLMVLCYSIMENTCTMTPTAKAWSYMEEEILGFGDSVCDNLGRRHTAACPLCAFCSLKLEQCHSEASVLRQQCDASHKIPFISPLLSAQSISTGNQAKIPEKGRFAGLEMYGGLSSEFWCNRLALKGCEDDRVANWLKAEFLSFQDGDLPTKICDTNYVQYPNYCSFKSQQCLLKNQNRKMSRMKCMLNEKYHVLSPAKGEEVILRWSQEFNTLTLGQFG.

The first 24 residues, 1–24 (MKLAASFLLMLLEVLLLPETPLSA), serve as a signal peptide directing secretion. Positions 25-104 (EEALASTPGS…ASWFESFCQF (80 aa)) are pro-ACR binding. Positions 25-272 (EEALASTPGS…NPSFFTPRVR (248 aa)) are cleaved as a propeptide — removed in mature form. The interval 181–266 (SLSLGGKEQQ…SKSLSSNPSF (86 aa)) is disordered. Over residues 195-213 (LGLEQQHKQEQIQEHKLEE) the composition is skewed to basic and acidic residues. Residues 214 to 241 (AQEQEEQEEEEEEEEAKQEEGQGTEEGL) are compositionally biased toward acidic residues. The span at 256–266 (QSKSLSSNPSF) shows a compositional bias: polar residues. Positions 316–424 (LPHTETLMVL…NQAKIPEKGR (109 aa)) are pro-ACR binding.

As to quaternary structure, binds pro-ACR. Does not bind the mature form of ACR. In terms of assembly, binds pro-ACR. Does not bind mature form of ACR. Post-translationally, the N-terminus is blocked. Phosphorylated on Tyr residues in capacitated sperm. In terms of processing, synthesized as a 60-kDa precursor, the 32-kDa mature form is post-translationally produced by the removal of the N-terminal half of the precursor during sperm maturation in the testis and/or epididymis.

It is found in the cytoplasmic vesicle. The protein resides in the secretory vesicle. Its subcellular location is the acrosome. Its function is as follows. Acrosomal protein that maintains proacrosin (pro-ACR) as an enzymatically inactive zymogen in the acrosome. Involved also in the acrosome formation. Maintains pro-ACR as an enzymatically inactive zymogen in the acrosome until acrosomal exocytosis. Partially also contributes to the assembly of acrosomal proteins to form an acrosomal granule. In terms of biological role, rodent specific isoform that participates in the formation of the acrosomal granule into the center of the acrosomal vesicle during early spermiogenesis. In the fertilization process promotes ACR release from the acrosome during acrosomal exocytosis. The chain is Acrosin-binding protein from Rattus norvegicus (Rat).